The following is a 256-amino-acid chain: tRNA pseudouridine synthase A (256 aa).

The active-site Nucleophile is aspartate 55. Tyrosine 113 is a binding site for substrate.

The protein belongs to the tRNA pseudouridine synthase TruA family. As to quaternary structure, homodimer.

The catalysed reaction is uridine(38/39/40) in tRNA = pseudouridine(38/39/40) in tRNA. Formation of pseudouridine at positions 38, 39 and 40 in the anticodon stem and loop of transfer RNAs. This is tRNA pseudouridine synthase A from Limosilactobacillus reuteri (strain DSM 20016) (Lactobacillus reuteri).